The following is a 131-amino-acid chain: Small ribosomal subunit protein uS8c (131 aa).

It belongs to the universal ribosomal protein uS8 family. As to quaternary structure, part of the 30S ribosomal subunit.

The protein localises to the plastid. Its subcellular location is the chloroplast. In terms of biological role, one of the primary rRNA binding proteins, it binds directly to 16S rRNA central domain where it helps coordinate assembly of the platform of the 30S subunit. This chain is Small ribosomal subunit protein uS8c (rps8), found in Phalaenopsis aphrodite subsp. formosana (Moth orchid).